A 372-amino-acid chain; its full sequence is Peptidyl-prolyl cis-trans isomerase D (372 aa).

Residues 10–173 (FFDIQIGQQQ…TDVTIAECGE (164 aa)) form the PPIase cyclophilin-type domain. The disordered stretch occupies residues 174-193 (LTGEDYDNADKQTPDATGDP). 3 TPR repeats span residues 215–248 (ASELKNFGNTAFKNGNIALGLEKYQKGLRYLNEF), 268–304 (FTLHSNSSLLANKLGQFKNGKTWATYALDVADAASAK), and 309–342 (AKVYYRRAVAESGLKEEDEALKDLEQASTLAPSD).

It belongs to the cyclophilin-type PPIase family. PPIase D subfamily.

Its subcellular location is the cytoplasm. It carries out the reaction [protein]-peptidylproline (omega=180) = [protein]-peptidylproline (omega=0). Functionally, PPIases accelerate the folding of proteins. It catalyzes the cis-trans isomerization of proline imidic peptide bonds in oligopeptides. This is Peptidyl-prolyl cis-trans isomerase D (cpr6) from Emericella nidulans (strain FGSC A4 / ATCC 38163 / CBS 112.46 / NRRL 194 / M139) (Aspergillus nidulans).